The following is a 333-amino-acid chain: Autoinducer 2 import system permease protein LsrD (333 aa).

A run of 10 helical transmembrane segments spans residues 7 to 27 (YGWE…FGLS), 45 to 65 (ICIG…GIDI), 67 to 87 (FGST…AGVP), 90 to 110 (VAIP…AGLI), 118 to 138 (LVIT…LSGL), 162 to 182 (LFGL…FWLL), 212 to 232 (TLCM…ILLV), 240 to 260 (SDLG…GGAN), 261 to 281 (IYGG…VGYL), and 288 to 308 (IGTP…LVVV).

Belongs to the binding-protein-dependent transport system permease family. AraH/RbsC subfamily. As to quaternary structure, the complex is composed of two ATP-binding proteins (LsrA), two transmembrane proteins (LsrC and LsrD) and a solute-binding protein (LsrB).

The protein localises to the cell inner membrane. Functionally, part of the ABC transporter complex LsrABCD involved in autoinducer 2 (AI-2) import. Probably responsible for the translocation of the substrate across the membrane. The chain is Autoinducer 2 import system permease protein LsrD (lsrD) from Yersinia pseudotuberculosis serotype I (strain IP32953).